Here is a 106-residue protein sequence, read N- to C-terminus: ATP-dependent Clp protease adapter protein ClpS (106 aa).

Belongs to the ClpS family. Binds to the N-terminal domain of the chaperone ClpA.

Functionally, involved in the modulation of the specificity of the ClpAP-mediated ATP-dependent protein degradation. This chain is ATP-dependent Clp protease adapter protein ClpS, found in Aliivibrio fischeri (strain ATCC 700601 / ES114) (Vibrio fischeri).